The sequence spans 822 residues: DNA gyrase subunit A (822 aa).

The region spanning 32–497 (LPDVRDGLKP…QVLSLEDEDL (466 aa)) is the Topo IIA-type catalytic domain. The active-site O-(5'-phospho-DNA)-tyrosine intermediate is tyrosine 120. A GyrA-box motif is present at residues 524 to 530 (QKRGGRG).

This sequence belongs to the type II topoisomerase GyrA/ParC subunit family. As to quaternary structure, heterotetramer, composed of two GyrA and two GyrB chains. In the heterotetramer, GyrA contains the active site tyrosine that forms a transient covalent intermediate with DNA, while GyrB binds cofactors and catalyzes ATP hydrolysis.

The protein localises to the cytoplasm. It carries out the reaction ATP-dependent breakage, passage and rejoining of double-stranded DNA.. A type II topoisomerase that negatively supercoils closed circular double-stranded (ds) DNA in an ATP-dependent manner to modulate DNA topology and maintain chromosomes in an underwound state. Negative supercoiling favors strand separation, and DNA replication, transcription, recombination and repair, all of which involve strand separation. Also able to catalyze the interconversion of other topological isomers of dsDNA rings, including catenanes and knotted rings. Type II topoisomerases break and join 2 DNA strands simultaneously in an ATP-dependent manner. This is DNA gyrase subunit A from Streptococcus pneumoniae serotype 4 (strain ATCC BAA-334 / TIGR4).